The sequence spans 141 residues: Succinate dehydrogenase assembly factor 2, mitochondrial (141 aa).

Belongs to the SDHAF2 family. As to quaternary structure, interacts with the flavoprotein subunit within the SDH catalytic dimer.

The protein resides in the mitochondrion matrix. In terms of biological role, plays an essential role in the assembly of succinate dehydrogenase (SDH), an enzyme complex (also referred to as respiratory complex II) that is a component of both the tricarboxylic acid (TCA) cycle and the mitochondrial electron transport chain, and which couples the oxidation of succinate to fumarate with the reduction of ubiquinone (coenzyme Q) to ubiquinol. Required for flavinylation (covalent attachment of FAD) of the flavoprotein subunit of the SDH catalytic dimer. The chain is Succinate dehydrogenase assembly factor 2, mitochondrial from Dictyostelium discoideum (Social amoeba).